Here is a 395-residue protein sequence, read N- to C-terminus: Putative 8-amino-7-oxononanoate synthase (395 aa).

Arg23 is a binding site for substrate. 110–111 (GF) is a binding site for pyridoxal 5'-phosphate. Residue His135 participates in substrate binding. Pyridoxal 5'-phosphate-binding positions include Ser182, 207 to 210 (DEAH), and 239 to 242 (TFSK). Lys242 is subject to N6-(pyridoxal phosphate)lysine. Thr356 provides a ligand contact to substrate.

It belongs to the class-II pyridoxal-phosphate-dependent aminotransferase family. BioF subfamily. Homodimer. Requires pyridoxal 5'-phosphate as cofactor.

The catalysed reaction is 6-carboxyhexanoyl-[ACP] + L-alanine + H(+) = (8S)-8-amino-7-oxononanoate + holo-[ACP] + CO2. The protein operates within cofactor biosynthesis; biotin biosynthesis. Functionally, catalyzes the decarboxylative condensation of pimeloyl-[acyl-carrier protein] and L-alanine to produce 8-amino-7-oxononanoate (AON), [acyl-carrier protein], and carbon dioxide. The polypeptide is Putative 8-amino-7-oxononanoate synthase (bioF) (Bacillus thuringiensis subsp. konkukian (strain 97-27)).